Here is a 447-residue protein sequence, read N- to C-terminus: tRNA threonylcarbamoyladenosine dehydratase 2 (447 aa).

Helical transmembrane passes span 9-29, 86-106, and 294-314; these read LITA…YAWT, NQYV…NSLV, and ILPV…TWIL.

Belongs to the HesA/MoeB/ThiF family.

Its subcellular location is the mitochondrion outer membrane. Functionally, catalyzes the ATP-dependent dehydration of threonylcarbamoyladenosine at position 37 (t(6)A37) to form cyclic t(6)A37 (ct(6)A37) in tRNAs that read codons beginning with adenine. This chain is tRNA threonylcarbamoyladenosine dehydratase 2 (TCD2), found in Saccharomyces cerevisiae (strain ATCC 204508 / S288c) (Baker's yeast).